Reading from the N-terminus, the 387-residue chain is Carboxynorspermidine/carboxyspermidine decarboxylase (387 aa).

Position 51 is an N6-(pyridoxal phosphate)lysine (Lys-51). Residues Glu-248 and Asp-284 each contribute to the substrate site.

The protein belongs to the Orn/Lys/Arg decarboxylase class-II family. NspC subfamily. In terms of assembly, homodimer. Pyridoxal 5'-phosphate serves as cofactor.

It is found in the cytoplasm. The catalysed reaction is carboxynorspermidine + H(+) = norspermidine + CO2. It catalyses the reaction carboxyspermidine + H(+) = spermidine + CO2. Its function is as follows. Catalyzes the decarboxylation of carboxynorspermidine and carboxyspermidine. Essential for biofilm formation. In Vibrio cholerae serotype O1 (strain ATCC 39315 / El Tor Inaba N16961), this protein is Carboxynorspermidine/carboxyspermidine decarboxylase.